Here is a 919-residue protein sequence, read N- to C-terminus: 2-oxoadipate dehydrogenase complex component E1 (919 aa).

Residues Lys183 and Lys188 each carry the N6-succinyllysine modification. The tract at residues 299–320 (GKTRGRQQSRQDGDYSPDNSAQ) is disordered. 2 positions are modified to N6-succinyllysine: Lys800 and Lys818.

This sequence belongs to the alpha-ketoglutarate dehydrogenase family. As to quaternary structure, the 2-oxoadipate dehydrogenase complex is composed of OADH (2-oxoadipate dehydrogenase; E1a), DLST (dihydrolipoamide succinyltransferase; E2) and DLD (dihydrolipoamide dehydrogenase; E3). E1a functional unit is a dimer. Interacts with DLST. The cofactor is thiamine diphosphate.

The protein localises to the mitochondrion. The catalysed reaction is N(6)-[(R)-lipoyl]-L-lysyl-[protein] + 2-oxoadipate + H(+) = N(6)-[(R)-S(8)-glutaryldihydrolipoyl]-L-lysyl-[protein] + CO2. It functions in the pathway amino-acid degradation. 2-oxoadipate dehydrogenase (E1a) component of the 2-oxoadipate dehydrogenase complex (OADHC). Participates in the first step, rate limiting for the overall conversion of 2-oxoadipate (alpha-ketoadipate) to glutaryl-CoA and CO(2) catalyzed by the whole OADHC. Catalyzes the irreversible decarboxylation of 2-oxoadipate via the thiamine diphosphate (ThDP) cofactor and subsequent transfer of the decarboxylated acyl intermediate on an oxidized dihydrolipoyl group that is covalently amidated to the E2 enzyme (dihydrolipoyllysine-residue succinyltransferase or DLST). Can catalyze the decarboxylation of 2-oxoglutarate in vitro, but at a much lower rate than 2-oxoadipate. Responsible for the last step of L-lysine, L-hydroxylysine and L-tryptophan catabolism with the common product being 2-oxoadipate. The chain is 2-oxoadipate dehydrogenase complex component E1 (DHTKD1) from Homo sapiens (Human).